The primary structure comprises 1062 residues: Isoleucine--tRNA ligase (1062 aa).

The short motif at P47–T57 is the 'HIGH' region element. The 'KMSKS' region signature appears at K591–S595. Position 594 (K594) interacts with ATP.

This sequence belongs to the class-I aminoacyl-tRNA synthetase family. IleS type 2 subfamily. In terms of assembly, monomer. Zn(2+) serves as cofactor.

It localises to the cytoplasm. The catalysed reaction is tRNA(Ile) + L-isoleucine + ATP = L-isoleucyl-tRNA(Ile) + AMP + diphosphate. In terms of biological role, catalyzes the attachment of isoleucine to tRNA(Ile). As IleRS can inadvertently accommodate and process structurally similar amino acids such as valine, to avoid such errors it has two additional distinct tRNA(Ile)-dependent editing activities. One activity is designated as 'pretransfer' editing and involves the hydrolysis of activated Val-AMP. The other activity is designated 'posttransfer' editing and involves deacylation of mischarged Val-tRNA(Ile). This chain is Isoleucine--tRNA ligase, found in Methanospirillum hungatei JF-1 (strain ATCC 27890 / DSM 864 / NBRC 100397 / JF-1).